Reading from the N-terminus, the 513-residue chain is Beta-glucosidase 5 (513 aa).

Positions 1–26 are cleaved as a signal peptide; sequence MAAAIAVVYLSLLLLLLHGAAPAVLG. Position 46 (glutamine 46) interacts with a beta-D-glucoside. Glutamate 192 (proton donor) is an active-site residue. A disulfide bond links cysteine 211 and cysteine 220. Residues asparagine 224 and asparagine 273 are each glycosylated (N-linked (GlcNAc...) asparagine). A beta-D-glucoside-binding residues include tyrosine 336 and glutamate 405. Residue glutamate 405 is the Nucleophile of the active site. Asparagine 412 is a glycosylation site (N-linked (GlcNAc...) asparagine). A beta-D-glucoside contacts are provided by residues tryptophan 447, 454–455, and tyrosine 463; that span reads EY.

Belongs to the glycosyl hydrolase 1 family.

The enzyme catalyses Hydrolysis of terminal, non-reducing beta-D-glucosyl residues with release of beta-D-glucose.. This Oryza sativa subsp. japonica (Rice) protein is Beta-glucosidase 5 (BGLU5).